A 335-amino-acid chain; its full sequence is SAM pointed domain-containing Ets transcription factor (335 aa).

The segment covering 1–20 (MGSASPGLSSVSPSHLLLPP) has biased composition (low complexity). 2 disordered regions span residues 1–25 (MGSA…TVSR) and 75–100 (AKAP…DSQA). Residues 129–213 (EVLKDIETAC…AHLDIWKSAA (85 aa)) form the PNT domain. Positions 249-332 (IHLWQFLKEL…ISQRLVYQFV (84 aa)) form a DNA-binding region, ETS.

This sequence belongs to the ETS family. As to quaternary structure, interacts with the DNA-binding domain of the androgen receptor. Interacts with NKX3-1. In terms of tissue distribution, expressed in a very restricted set of primarily hormone-regulated epithelial tissues with particularly high expression in the prostate gland. Significantly lower expression is seen in other hormone regulated tissues such as mammary gland, salivary gland, and ovary. Expressed in prostate carcinoma cells.

The protein localises to the nucleus. May function as an androgen-independent transactivator of the prostate-specific antigen (PSA) promoter. Binds to 5'-GGAT-3' DNA sequences. May play a role in the regulation of the prostate gland and/or prostate cancer development. Acts as a transcriptional activator for SERPINB5 promoter. This Homo sapiens (Human) protein is SAM pointed domain-containing Ets transcription factor (SPDEF).